A 245-amino-acid polypeptide reads, in one-letter code: Small ribosomal subunit protein uS3 (245 aa).

Positions 38 to 106 constitute a KH type-2 domain; sequence IRKYLNTRLA…EVQINIFEIK (69 aa). The disordered stretch occupies residues 225–245; sequence YEGSGDKSVKRRKRNGIKKNE. Positions 233–245 are enriched in basic residues; that stretch reads VKRRKRNGIKKNE.

This sequence belongs to the universal ribosomal protein uS3 family. In terms of assembly, part of the 30S ribosomal subunit. Forms a tight complex with proteins S10 and S14.

Its function is as follows. Binds the lower part of the 30S subunit head. Binds mRNA in the 70S ribosome, positioning it for translation. The chain is Small ribosomal subunit protein uS3 from Azobacteroides pseudotrichonymphae genomovar. CFP2.